We begin with the raw amino-acid sequence, 391 residues long: Formate-dependent phosphoribosylglycinamide formyltransferase (391 aa).

N(1)-(5-phospho-beta-D-ribosyl)glycinamide-binding positions include 18–19 and glutamate 78; that span reads EL. ATP is bound by residues arginine 110, lysine 151, 156–161, 191–194, and glutamate 199; these read SSGKGQ and EEFI. The region spanning 115–305 is the ATP-grasp domain; sequence ELAHEELGIR…EFELHLRAIL (191 aa). Glutamate 264 and glutamate 276 together coordinate Mg(2+). N(1)-(5-phospho-beta-D-ribosyl)glycinamide contacts are provided by residues aspartate 283, lysine 353, and 360 to 361; that span reads RR.

Belongs to the PurK/PurT family. As to quaternary structure, homodimer.

The enzyme catalyses N(1)-(5-phospho-beta-D-ribosyl)glycinamide + formate + ATP = N(2)-formyl-N(1)-(5-phospho-beta-D-ribosyl)glycinamide + ADP + phosphate + H(+). Its pathway is purine metabolism; IMP biosynthesis via de novo pathway; N(2)-formyl-N(1)-(5-phospho-D-ribosyl)glycinamide from N(1)-(5-phospho-D-ribosyl)glycinamide (formate route): step 1/1. In terms of biological role, involved in the de novo purine biosynthesis. Catalyzes the transfer of formate to 5-phospho-ribosyl-glycinamide (GAR), producing 5-phospho-ribosyl-N-formylglycinamide (FGAR). Formate is provided by PurU via hydrolysis of 10-formyl-tetrahydrofolate. This Nostoc sp. (strain PCC 7120 / SAG 25.82 / UTEX 2576) protein is Formate-dependent phosphoribosylglycinamide formyltransferase.